A 32-amino-acid chain; its full sequence is Protamine-1 (32 aa).

A disordered region spans residues 1–32; that stretch reads PRRRRASSGRPVRRRRRPKMSRRRRRGGRRRR.

As to expression, testis.

The protein localises to the nucleus. It localises to the chromosome. Functionally, protamines substitute for histones in the chromatin of sperm during the haploid phase of spermatogenesis. They compact sperm DNA into a highly condensed, stable and inactive complex. The sequence is that of Protamine-1 from Esox lucius (Northern pike).